A 47-amino-acid polypeptide reads, in one-letter code: Large ribosomal subunit protein eL40 (47 aa).

The protein belongs to the eukaryotic ribosomal protein eL40 family.

This Methanococcus vannielii (strain ATCC 35089 / DSM 1224 / JCM 13029 / OCM 148 / SB) protein is Large ribosomal subunit protein eL40.